Consider the following 380-residue polypeptide: Outer membrane protein assembly factor BamB (380 aa).

The signal sequence occupies residues 1–18 (MVQWKHAALLALALAVVG). C19 is lipidated: N-palmitoyl cysteine. C19 is lipidated: S-diacylglycerol cysteine.

The protein belongs to the BamB family. As to quaternary structure, part of the Bam complex.

It is found in the cell outer membrane. Part of the outer membrane protein assembly complex, which is involved in assembly and insertion of beta-barrel proteins into the outer membrane. In Pseudomonas aeruginosa (strain ATCC 15692 / DSM 22644 / CIP 104116 / JCM 14847 / LMG 12228 / 1C / PRS 101 / PAO1), this protein is Outer membrane protein assembly factor BamB.